A 382-amino-acid chain; its full sequence is Phenylalanine dehydrogenase (382 aa).

Residue arginine 54 participates in NAD(+) binding. Lysine 78 contributes to the L-phenylalanine binding site. Residue lysine 90 is the Proton donor/acceptor of the active site. NAD(+) is bound by residues aspartate 125, serine 156, threonine 160, 190 to 196 (GLGKVGY), 213 to 214 (DI), 253 to 254 (AF), and 274 to 276 (SAN). Position 276 (asparagine 276) interacts with L-phenylalanine.

This sequence belongs to the Glu/Leu/Phe/Val dehydrogenases family.

The catalysed reaction is L-phenylalanine + NAD(+) + H2O = 3-phenylpyruvate + NH4(+) + NADH + H(+). With respect to regulation, activity is not affected by the metal chelating agent EDTA. Addition of 1 mM Mg(2+) results in 15% increase in activity, while the enzyme is strongly inhibited by 1 mM Fe(3+), Fe(2+), Cu(2+), Zn(2+) and Ag(+). Functionally, catalyzes the reversible NAD(+)-dependent oxidative deamination of L-phenylalanine to phenylpyruvate. Can also catalyze the oxidative deamination of several other amino acids, with much lower efficiency. Shows activity towards various bulky aromatic alpha-keto acids/esters and (S)-amine alcohols. Can catalyze the amination of 3-(2-chlorophenyl)-2-oxopropionic acid (CPOA) to produce 2-chloro-L-phenylalanine (2-Cl-Phe), a chemical compound used in the pharmaceutical and biotechnology industries. Shows a preference for amination over deamination. This is Phenylalanine dehydrogenase from Bacillus thermotolerans (Quasibacillus thermotolerans).